A 265-amino-acid chain; its full sequence is uncharacterized protein (265 aa).

6 residues coordinate a divalent metal cation: His7, His9, Glu95, His131, His156, and Asp206.

The protein belongs to the metallo-dependent hydrolases superfamily. TatD-type hydrolase family. It depends on a divalent metal cation as a cofactor.

This is an uncharacterized protein from Buchnera aphidicola subsp. Baizongia pistaciae (strain Bp).